We begin with the raw amino-acid sequence, 250 residues long: DNA repair protein RecO (250 aa).

This sequence belongs to the RecO family.

In terms of biological role, involved in DNA repair and RecF pathway recombination. The chain is DNA repair protein RecO from Beijerinckia indica subsp. indica (strain ATCC 9039 / DSM 1715 / NCIMB 8712).